Consider the following 217-residue polypeptide: UPF0502 protein KPK_3478 (217 aa).

It belongs to the UPF0502 family.

This chain is UPF0502 protein KPK_3478, found in Klebsiella pneumoniae (strain 342).